The sequence spans 115 residues: Large ribosomal subunit protein uL22 (115 aa).

It belongs to the universal ribosomal protein uL22 family. As to quaternary structure, part of the 50S ribosomal subunit.

This protein binds specifically to 23S rRNA; its binding is stimulated by other ribosomal proteins, e.g. L4, L17, and L20. It is important during the early stages of 50S assembly. It makes multiple contacts with different domains of the 23S rRNA in the assembled 50S subunit and ribosome. In terms of biological role, the globular domain of the protein is located near the polypeptide exit tunnel on the outside of the subunit, while an extended beta-hairpin is found that lines the wall of the exit tunnel in the center of the 70S ribosome. The sequence is that of Large ribosomal subunit protein uL22 from Ligilactobacillus salivarius (strain UCC118) (Lactobacillus salivarius).